Consider the following 78-residue polypeptide: Small ribosomal subunit protein bS18 (78 aa).

Belongs to the bacterial ribosomal protein bS18 family. Part of the 30S ribosomal subunit. Forms a tight heterodimer with protein bS6.

Functionally, binds as a heterodimer with protein bS6 to the central domain of the 16S rRNA, where it helps stabilize the platform of the 30S subunit. The chain is Small ribosomal subunit protein bS18 from Lactobacillus johnsonii (strain CNCM I-12250 / La1 / NCC 533).